A 622-amino-acid polypeptide reads, in one-letter code: DNA polymerase II small subunit (622 aa).

Positions 76-113 are disordered; it reads ISTGEGSQKVPDHEELEKITNESSVESSISTGETPKTE. Residues 85–95 show a composition bias toward basic and acidic residues; the sequence is VPDHEELEKIT. The span at 96–109 shows a compositional bias: polar residues; that stretch reads NESSVESSISTGET.

This sequence belongs to the DNA polymerase delta/II small subunit family. In terms of assembly, heterodimer of a large subunit and a small subunit.

The catalysed reaction is DNA(n) + a 2'-deoxyribonucleoside 5'-triphosphate = DNA(n+1) + diphosphate. It carries out the reaction Exonucleolytic cleavage in the 3'- to 5'-direction to yield nucleoside 5'-phosphates.. Functionally, possesses two activities: a DNA synthesis (polymerase) and an exonucleolytic activity that degrades single-stranded DNA in the 3' to 5' direction. Has a template-primer preference which is characteristic of a replicative DNA polymerase. This is DNA polymerase II small subunit (polB) from Pyrococcus horikoshii (strain ATCC 700860 / DSM 12428 / JCM 9974 / NBRC 100139 / OT-3).